A 151-amino-acid polypeptide reads, in one-letter code: Small ribosomal subunit protein uS15 (151 aa).

The tract at residues 1 to 20 (MARLHSGKRGSSGSTRPLRT) is disordered.

The protein belongs to the universal ribosomal protein uS15 family. In terms of assembly, part of the 30S ribosomal subunit.

The polypeptide is Small ribosomal subunit protein uS15 (Methanococcus aeolicus (strain ATCC BAA-1280 / DSM 17508 / OCM 812 / Nankai-3)).